The chain runs to 860 residues: DNA gyrase subunit A (860 aa).

One can recognise a Topo IIA-type catalytic domain in the interval 34–503 (LPDARDGLKP…EDGELIDTDL (470 aa)). The O-(5'-phospho-DNA)-tyrosine intermediate role is filled by Tyr122. The GyrA-box signature appears at 530 to 536 (QNRATRG).

The protein belongs to the type II topoisomerase GyrA/ParC subunit family. As to quaternary structure, heterotetramer, composed of two GyrA and two GyrB chains. In the heterotetramer, GyrA contains the active site tyrosine that forms a transient covalent intermediate with DNA, while GyrB binds cofactors and catalyzes ATP hydrolysis.

The protein localises to the cytoplasm. The catalysed reaction is ATP-dependent breakage, passage and rejoining of double-stranded DNA.. In terms of biological role, a type II topoisomerase that negatively supercoils closed circular double-stranded (ds) DNA in an ATP-dependent manner to modulate DNA topology and maintain chromosomes in an underwound state. Negative supercoiling favors strand separation, and DNA replication, transcription, recombination and repair, all of which involve strand separation. Also able to catalyze the interconversion of other topological isomers of dsDNA rings, including catenanes and knotted rings. Type II topoisomerases break and join 2 DNA strands simultaneously in an ATP-dependent manner. This chain is DNA gyrase subunit A, found in Synechocystis sp. (strain ATCC 27184 / PCC 6803 / Kazusa).